The chain runs to 273 residues: Ribosomal RNA small subunit methyltransferase A (273 aa).

Residues Asn18, Leu20, Gly45, Glu66, Asp91, and Asn113 each contribute to the S-adenosyl-L-methionine site.

It belongs to the class I-like SAM-binding methyltransferase superfamily. rRNA adenine N(6)-methyltransferase family. RsmA subfamily.

The protein localises to the cytoplasm. The enzyme catalyses adenosine(1518)/adenosine(1519) in 16S rRNA + 4 S-adenosyl-L-methionine = N(6)-dimethyladenosine(1518)/N(6)-dimethyladenosine(1519) in 16S rRNA + 4 S-adenosyl-L-homocysteine + 4 H(+). Functionally, specifically dimethylates two adjacent adenosines (A1518 and A1519) in the loop of a conserved hairpin near the 3'-end of 16S rRNA in the 30S particle. May play a critical role in biogenesis of 30S subunits. The polypeptide is Ribosomal RNA small subunit methyltransferase A (Shigella boydii serotype 4 (strain Sb227)).